A 785-amino-acid chain; its full sequence is Protein kintoun (785 aa).

2 stretches are compositionally biased toward basic and acidic residues: residues 622–638 (EHNEQCTDHSESERDTS) and 662–679 (HNIELGREHTSERDKEPK). 2 disordered regions span residues 622–698 (EHNE…DSHL) and 719–749 (KSSVQTTQESDLDEDDMPDNSDHLQNSASSN). A compositionally biased stretch (polar residues) spans 681–695 (TSCTAESTSGQQPND). Over residues 728–737 (SDLDEDDMPD) the composition is skewed to acidic residues.

It belongs to the PIH1 family. Kintoun subfamily.

The protein localises to the cytoplasm. Its subcellular location is the dynein axonemal particle. Its function is as follows. Required for cytoplasmic pre-assembly of axonemal dyneins, thereby playing a central role in motility in cilia and flagella. Involved in pre-assembly of dynein arm complexes in the cytoplasm before intraflagellar transport loads them for the ciliary compartment. The polypeptide is Protein kintoun (Xenopus tropicalis (Western clawed frog)).